The chain runs to 445 residues: Tubulin beta-3 chain (445 aa).

GTP-binding residues include glutamine 11, glutamate 69, serine 138, glycine 142, threonine 143, glycine 144, asparagine 204, and asparagine 226. Position 69 (glutamate 69) interacts with Mg(2+). The tract at residues 421 to 445 (EYQQYQDATADEEEEYDEEEEEEAA) is disordered. The span at 429 to 445 (TADEEEEYDEEEEEEAA) shows a compositional bias: acidic residues.

Belongs to the tubulin family. Dimer of alpha and beta chains. A typical microtubule is a hollow water-filled tube with an outer diameter of 25 nm and an inner diameter of 15 nM. Alpha-beta heterodimers associate head-to-tail to form protofilaments running lengthwise along the microtubule wall with the beta-tubulin subunit facing the microtubule plus end conferring a structural polarity. Microtubules usually have 13 protofilaments but different protofilament numbers can be found in some organisms and specialized cells. Mg(2+) serves as cofactor.

It localises to the cytoplasm. Its subcellular location is the cytoskeleton. In terms of biological role, tubulin is the major constituent of microtubules, a cylinder consisting of laterally associated linear protofilaments composed of alpha- and beta-tubulin heterodimers. Microtubules grow by the addition of GTP-tubulin dimers to the microtubule end, where a stabilizing cap forms. Below the cap, tubulin dimers are in GDP-bound state, owing to GTPase activity of alpha-tubulin. The chain is Tubulin beta-3 chain (TUBB3) from Triticum aestivum (Wheat).